Consider the following 647-residue polypeptide: Chaperone protein DnaK (647 aa).

Phosphothreonine; by autocatalysis is present on Thr-198. A disordered region spans residues 603 to 647 (EQAQGAGGAQGFDPNAFQGGDAGQQQKADDGVVDAEFTEVKDDKK). Residues 618–628 (AFQGGDAGQQQ) are compositionally biased toward low complexity.

This sequence belongs to the heat shock protein 70 family.

Its function is as follows. Acts as a chaperone. This chain is Chaperone protein DnaK, found in Acinetobacter baylyi (strain ATCC 33305 / BD413 / ADP1).